The following is an 81-amino-acid chain: Conotoxin Vc6.7 (81 aa).

The N-terminal stretch at 1 to 19 is a signal peptide; the sequence is MEKLTILLLVAAVLMSIQA. The propeptide occupies 20–44; the sequence is VNQEKHQRAKMNLLSKRKPPAERWW. Cystine bridges form between C49–C63, C56–C67, and C62–C72.

Belongs to the conotoxin O2 superfamily. As to expression, expressed by the venom duct.

The protein resides in the secreted. Its function is as follows. Inhibits voltage-gated ion channels. This Conus victoriae (Queen Victoria cone) protein is Conotoxin Vc6.7.